We begin with the raw amino-acid sequence, 788 residues long: Ribosome biogenesis protein ERB1 (788 aa).

The tract at residues 1–91 (MGDLKGSRKR…SKPIREKSKP (91 aa)) is disordered. The span at 38-50 (LSDKSHDTEHSSD) shows a compositional bias: basic and acidic residues. Residues 51 to 78 (SEIELVDDLSSDDGEEYEDEFDSDEIPS) show a composition bias toward acidic residues. Over residues 80–91 (IESKPIREKSKP) the composition is skewed to basic and acidic residues. WD repeat units follow at residues 433 to 472 (GHSG…QIWS), 476 to 516 (SDEE…PEME), 613 to 651 (KGGG…LVKI), 654 to 699 (PGAR…RPYK), 703 to 742 (YHQK…DLLS), and 758 to 788 (TGEL…RLWT).

It belongs to the WD repeat BOP1/ERB1 family. Component of the NOP7 complex, composed of ERB1, NOP7 and YTM1. The complex is held together by ERB1, which interacts with NOP7 via its N-terminal domain and with YTM1 via a high-affinity interaction between the seven-bladed beta-propeller domains of the 2 proteins. The NOP7 complex associates with the 66S pre-ribosome.

It localises to the nucleus. Its subcellular location is the nucleolus. The protein resides in the nucleoplasm. Component of the NOP7 complex, which is required for maturation of the 25S and 5.8S ribosomal RNAs and formation of the 60S ribosome. The protein is Ribosome biogenesis protein ERB1 of Ajellomyces capsulatus (strain NAm1 / WU24) (Darling's disease fungus).